Reading from the N-terminus, the 392-residue chain is S-adenosylmethionine decarboxylase proenzyme (392 aa).

Residues Glu43 and Glu46 contribute to the active site. Catalysis depends on Ser100, which acts as the Schiff-base intermediate with substrate; via pyruvic acid. Residue Ser100 is modified to Pyruvic acid (Ser); by autocatalysis. The active-site Proton donor; for catalytic activity is the Cys114. Residues Ser264 and His277 each act as proton acceptor; for processing activity in the active site.

It belongs to the eukaryotic AdoMetDC family. Requires pyruvate as cofactor. Post-translationally, is synthesized initially as an inactive proenzyme. Formation of the active enzyme involves a self-maturation process in which the active site pyruvoyl group is generated from an internal serine residue via an autocatalytic post-translational modification. Two non-identical subunits are generated from the proenzyme in this reaction, and the pyruvate is formed at the N-terminus of the alpha chain, which is derived from the carboxyl end of the proenzyme. The post-translation cleavage follows an unusual pathway, termed non-hydrolytic serinolysis, in which the side chain hydroxyl group of the serine supplies its oxygen atom to form the C-terminus of the beta chain, while the remainder of the serine residue undergoes an oxidative deamination to produce ammonia and the pyruvoyl group blocking the N-terminus of the alpha chain.

It catalyses the reaction S-adenosyl-L-methionine + H(+) = S-adenosyl 3-(methylsulfanyl)propylamine + CO2. Its pathway is amine and polyamine biosynthesis; S-adenosylmethioninamine biosynthesis; S-adenosylmethioninamine from S-adenosyl-L-methionine: step 1/1. This is S-adenosylmethionine decarboxylase proenzyme from Leishmania infantum.